Here is a 262-residue protein sequence, read N- to C-terminus: Ribosomal RNA small subunit methyltransferase A (262 aa).

6 residues coordinate S-adenosyl-L-methionine: histidine 16, leucine 18, glycine 43, glutamate 64, aspartate 89, and asparagine 109.

Belongs to the class I-like SAM-binding methyltransferase superfamily. rRNA adenine N(6)-methyltransferase family. RsmA subfamily.

It localises to the cytoplasm. It carries out the reaction adenosine(1518)/adenosine(1519) in 16S rRNA + 4 S-adenosyl-L-methionine = N(6)-dimethyladenosine(1518)/N(6)-dimethyladenosine(1519) in 16S rRNA + 4 S-adenosyl-L-homocysteine + 4 H(+). In terms of biological role, specifically dimethylates two adjacent adenosines (A1518 and A1519) in the loop of a conserved hairpin near the 3'-end of 16S rRNA in the 30S particle. May play a critical role in biogenesis of 30S subunits. In Xanthomonas euvesicatoria pv. vesicatoria (strain 85-10) (Xanthomonas campestris pv. vesicatoria), this protein is Ribosomal RNA small subunit methyltransferase A.